Here is a 361-residue protein sequence, read N- to C-terminus: Zinc transporter ZIP13 (361 aa).

The Lumenal segment spans residues 1–6 (MPGCPC). A helical transmembrane segment spans residues 7-27 (PGCGMAGQRLLFLTVLALELL). The Cytoplasmic portion of the chain corresponds to 28–68 (ERAGGSQPALRSLGAAAACRLDSKESESWGALLSGERLDTW). Residues 69–89 (ICSLLGSLMVGLSGVFPLLVI) form a helical membrane-spanning segment. Over 90-108 (PLEMGTMLQSEAGAWRLKQ) the chain is Lumenal. A helical transmembrane segment spans residues 109-129 (LLSFALGGLLGNVFLHLLPEA). Over 130-150 (WAYTCNISPGVEGQSLQRQQQ) the chain is Cytoplasmic. Residues 151-171 (LGLWVIAGFLTFLALEKMFLN) form a helical membrane-spanning segment. Over 172–233 (CKEEDPSQAP…TIDNFTHGLA (62 aa)) the chain is Lumenal. Residues 234–254 (VAASFLVSKKIGLLTTMAILL) traverse the membrane as a helical segment. The XEXPHE-motif signature appears at 255 to 260 (HEIPHE). The Cytoplasmic portion of the chain corresponds to 255–276 (HEIPHEVGDFAILLRAGFDRWT). Residues 277-297 (AAKLQFSTALGGLLGACFAIC) form a helical membrane-spanning segment. Over 298–307 (TQSPKGVEET) the chain is Lumenal. Residues 308-328 (VVWTLPFTSGGFLYVALVNVL) form a helical membrane-spanning segment. Over 329–340 (PDLLEEDDPWHL) the chain is Cytoplasmic. A helical membrane pass occupies residues 341-361 (NPPLPTGTPCSRCCCSAPVSW).

The protein belongs to the ZIP transporter (TC 2.A.5) family. In terms of assembly, homodimer.

The protein localises to the golgi apparatus membrane. It is found in the cytoplasmic vesicle membrane. It localises to the endoplasmic reticulum membrane. The enzyme catalyses Zn(2+)(in) = Zn(2+)(out). Its function is as follows. Functions as a zinc transporter transporting Zn(2+) from the Golgi apparatus to the cytosol and thus influences the zinc level at least in areas of the cytosol. May regulate beige adipocyte differentiation. The sequence is that of Zinc transporter ZIP13 from Rattus norvegicus (Rat).